The primary structure comprises 66 residues: Surface composition regulator (66 aa).

It belongs to the GlgS family.

Functionally, major determinant of cell surface composition. Negatively regulates motility, adhesion and synthesis of biofilm exopolysaccharides. The polypeptide is Surface composition regulator (Shigella flexneri).